Consider the following 135-residue polypeptide: Large ribosomal subunit protein mL41B (135 aa).

The transit peptide at 1-13 directs the protein to the mitochondrion; sequence MGLITKIARGLVR.

It belongs to the mitochondrion-specific ribosomal protein mL41 family. Component of the mitochondrial ribosome large subunit (39S) which comprises a 16S rRNA and about 50 distinct proteins.

It is found in the mitochondrion. Functionally, component of the mitochondrial ribosome large subunit. Also involved in apoptosis and cell cycle. This chain is Large ribosomal subunit protein mL41B (mrpl41-b), found in Xenopus laevis (African clawed frog).